The primary structure comprises 152 residues: CMT1A duplicated region transcript 4 protein (152 aa).

Residues 1–11 (MDARRMKKEEG) are compositionally biased toward basic and acidic residues. Disordered regions lie at residues 1-23 (MDAR…RKLL) and 60-89 (ERPW…GKAV). A compositionally biased stretch (polar residues) spans 65 to 74 (SRQNKPSSVI).

In terms of tissue distribution, expressed in fetal skeletal muscle and kidney.

This Homo sapiens (Human) protein is CMT1A duplicated region transcript 4 protein (CDRT4).